The chain runs to 275 residues: Fructose-2,6-bisphosphatase TIGAR (275 aa).

The active-site Tele-phosphohistidine intermediate is the histidine 11. The active-site Proton donor/acceptor is the glutamate 89.

Belongs to the phosphoglycerate mutase family.

The protein localises to the cytoplasm. The protein resides in the nucleus. It localises to the mitochondrion. The enzyme catalyses beta-D-fructose 2,6-bisphosphate + H2O = beta-D-fructose 6-phosphate + phosphate. In terms of biological role, fructose-bisphosphatase hydrolyzing fructose-2,6-bisphosphate as well as fructose-1,6-bisphosphate. Acts as a negative regulator of glycolysis by lowering intracellular levels of fructose-2,6-bisphosphate in a p53/TP53-dependent manner, resulting in the pentose phosphate pathway (PPP) activation and NADPH production. Contributes to the generation of reduced glutathione to cause a decrease in intracellular reactive oxygen species (ROS) content, correlating with its ability to protect cells from oxidative or metabolic stress-induced cell death. May play a role in mitophagy inhibition. In Xenopus laevis (African clawed frog), this protein is Fructose-2,6-bisphosphatase TIGAR.